We begin with the raw amino-acid sequence, 181 residues long: Major urinary protein 11 (181 aa).

A signal peptide spans M1–A19. Cysteines 83 and 176 form a disulfide.

This sequence belongs to the calycin superfamily. Lipocalin family.

Its subcellular location is the secreted. Functionally, major urinary proteins (Mups) bind pheromones, and thus stabilize them to allow slow release into the air from urine marks. May protect pheromones from oxidation. May also act as pheromones themselves. In this context, they play a role in the regulation of social behaviors, such as aggression, mating, pup-suckling, territory establishment and dominance. Binds the pheromone analog 2-sec-butyl-4,5-dihydrothiazole (SBT) in vitro. In Mus musculus (Mouse), this protein is Major urinary protein 11.